The sequence spans 387 residues: MAQEGQNIDEPVVIGEEKGSVRLTTLNRPRQLNVISPEVVFKLAEYLELWEKDDQTKLILIKGTGRAFSAGGDLKVFYHGQESKDSCLEVVYRMYWLCYHIHTYKKTQVSLVNGISMGGGAALMVPMKFSVVTEKTVFATPEASFGFHTDCGFSYIHSRLPGHLGEFLALTGARLNGKELVAIGMATHFVPSGKLMDLEARLVSLDSGDADVVQSTIEEFSEKVNLDKDSILNKQSVINECFSKESVKQIIQAFEAEASKDGNEWITPVIKGLKRSSPTGLKIVLQSIREGRKQTLSDCLKKEFRLTLNILRKTISPDMYEGIRALTIDKDNSPKWNPATLDEVDDEKINSVFKLFEDDDIELQIPETEENRWGGKYETSGYASVRG.

N-acetylalanine is present on alanine 2.

The protein belongs to the enoyl-CoA hydratase/isomerase family.

The sequence is that of 3-hydroxyisobutyryl-CoA hydrolase-like protein 5 from Arabidopsis thaliana (Mouse-ear cress).